Consider the following 306-residue polypeptide: Recombination-associated protein RdgC (306 aa).

Belongs to the RdgC family.

Its subcellular location is the cytoplasm. It is found in the nucleoid. Its function is as follows. May be involved in recombination. The protein is Recombination-associated protein RdgC of Pseudomonas fluorescens (strain Pf0-1).